Reading from the N-terminus, the 255-residue chain is Flagellar L-ring protein (255 aa).

A signal peptide spans 1–25 (MRRHSTRKTVARVAVVALAVGVLAG). Residue C26 is the site of N-palmitoyl cysteine attachment. C26 carries the S-diacylglycerol cysteine lipid modification.

The protein belongs to the FlgH family. The basal body constitutes a major portion of the flagellar organelle and consists of four rings (L,P,S, and M) mounted on a central rod.

The protein localises to the cell outer membrane. It is found in the bacterial flagellum basal body. Its function is as follows. Assembles around the rod to form the L-ring and probably protects the motor/basal body from shearing forces during rotation. This chain is Flagellar L-ring protein, found in Rhodospirillum rubrum (strain ATCC 11170 / ATH 1.1.1 / DSM 467 / LMG 4362 / NCIMB 8255 / S1).